The sequence spans 964 residues: Protein HIRA (964 aa).

WD repeat units lie at residues 10 to 50, 64 to 103, 123 to 162, 165 to 204, 259 to 331, and 335 to 376; these read RHEG…KDNT, DHFG…GTSE, GHTA…CTAV, GHTS…LAHK, GHNA…PLFV, and FFSQ…HRLS. The disordered stretch occupies residues 453–490; it reads SHEDSKKTAGPTADDVKKGNQLSSPVKQREYRRPDGRK. Residues 479-490 are compositionally biased toward basic and acidic residues; the sequence is KQREYRRPDGRK. The WD 7 repeat unit spans residues 644–685; that stretch reads LWSDRISGKVTVLAGNANFWAVGCEDGFLQVYTRCGVRAMPA. The stretch at 920–940 forms a coiled coil; it reads ASNRKVQRLLNEFMDLLLEYE.

This sequence belongs to the WD repeat HIR1 family. Interacts with RS2. In terms of tissue distribution, more abundant in apices and young leaf primordia than in fully expanded leaf tissues.

It is found in the nucleus. Functionally, histone chaperone involved in maintining knox genes silencing throughout leaf development. In Zea mays (Maize), this protein is Protein HIRA.